Consider the following 156-residue polypeptide: Riboflavin synthase (156 aa).

It belongs to the DMRL synthase family.

It carries out the reaction 2 6,7-dimethyl-8-(1-D-ribityl)lumazine + H(+) = 5-amino-6-(D-ribitylamino)uracil + riboflavin. The protein operates within cofactor biosynthesis; riboflavin biosynthesis; riboflavin from 2-hydroxy-3-oxobutyl phosphate and 5-amino-6-(D-ribitylamino)uracil: step 2/2. The polypeptide is Riboflavin synthase (ribC) (Methanocaldococcus jannaschii (strain ATCC 43067 / DSM 2661 / JAL-1 / JCM 10045 / NBRC 100440) (Methanococcus jannaschii)).